The sequence spans 182 residues: ATP synthase subunit delta (182 aa).

The protein belongs to the ATPase delta chain family. As to quaternary structure, F-type ATPases have 2 components, F(1) - the catalytic core - and F(0) - the membrane proton channel. F(1) has five subunits: alpha(3), beta(3), gamma(1), delta(1), epsilon(1). CF(0) has four main subunits: a(1), b(1), b'(1) and c(10-14). The alpha and beta chains form an alternating ring which encloses part of the gamma chain. F(1) is attached to F(0) by a central stalk formed by the gamma and epsilon chains, while a peripheral stalk is formed by the delta, b and b' chains.

It localises to the cellular thylakoid membrane. In terms of biological role, f(1)F(0) ATP synthase produces ATP from ADP in the presence of a proton or sodium gradient. F-type ATPases consist of two structural domains, F(1) containing the extramembraneous catalytic core and F(0) containing the membrane proton channel, linked together by a central stalk and a peripheral stalk. During catalysis, ATP synthesis in the catalytic domain of F(1) is coupled via a rotary mechanism of the central stalk subunits to proton translocation. Functionally, this protein is part of the stalk that links CF(0) to CF(1). It either transmits conformational changes from CF(0) to CF(1) or is implicated in proton conduction. This chain is ATP synthase subunit delta, found in Synechococcus sp. (strain CC9902).